The chain runs to 737 residues: Palmitoyltransferase akr1 (737 aa).

Residues 1–15 are compositionally biased toward low complexity; that stretch reads MSSGNSSTGTHTNGN. The segment at 1–39 is disordered; sequence MSSGNSSTGTHTNGNFATLGSSPPSAVGGKGRAIPPKVT. At 1-313 the chain is on the cytoplasmic side; it reads MSSGNSSTGT…WVRNKSLMSK (313 aa). ANK repeat units follow at residues 96 to 125, 130 to 159, 163 to 192, 196 to 225, and 228 to 258; these read EGITPLHWAAINNQYAMCKFLLDSGADVNA, SVATPAMWAAQRCHYYIVHLLLQRGADPLL, QGYNILHLATIDGNAFLLVLLLHQEIPVDV, QGHTGLMWAAYKGYPALVDLFLRWGAHANA, and EGGLTPLHWALVKGSLPCVLKLIEYGADKFA. A run of 2 helical transmembrane segments spans residues 314–334 and 335–355; these read FFFLWPFAIVFAAVWILSNMV and VYAAIPMMLVTVFGLQWVAQK. At 356 to 374 the chain is on the cytoplasmic side; that stretch reads AASQGPSEYRILQKTPYLS. The helical transmembrane segment at 375–395 threads the bilayer; it reads GVFAGSLFWVGFRYVFYVLPV. The Lumenal portion of the chain corresponds to 396 to 401; sequence TYSTSP. Residues 402-422 traverse the membrane as a helical segment; that stretch reads ILNGLFAIFFSLTTYFYIYSM. Residues 423 to 498 lie on the Cytoplasmic side of the membrane; it reads VEDPGFVPKL…DNCVGANNLR (76 aa). The DHHC domain occupies 455–505; that stretch reads NFCVSCMVRRPLRSKHCKRCARCVAKHDHHCPWIDNCVGANNLRHFVLYIT. Catalysis depends on C485, which acts as the S-palmitoyl cysteine intermediate. The helical transmembrane segment at 499–519 threads the bilayer; sequence HFVLYITCLEVGIVLFVQLTF. The Lumenal portion of the chain corresponds to 520–548; that stretch reads NYINSLPAPAQPQCNIINETLCDFVLRDT. The helical transmembrane segment at 549–569 threads the bilayer; that stretch reads FTLVLDLWVCIQLVWITMLVA. Residues 570–737 lie on the Cytoplasmic side of the membrane; sequence VQMIQISRNQ…LSVEDPEQGV (168 aa).

Belongs to the DHHC palmitoyltransferase family. AKR/ZDHHC17 subfamily.

It is found in the early endosome membrane. The protein resides in the golgi apparatus membrane. It catalyses the reaction L-cysteinyl-[protein] + hexadecanoyl-CoA = S-hexadecanoyl-L-cysteinyl-[protein] + CoA. In terms of biological role, palmitoyltransferase specific for casein kinase 1. The polypeptide is Palmitoyltransferase akr1 (akr1) (Aspergillus oryzae (strain ATCC 42149 / RIB 40) (Yellow koji mold)).